Here is a 57-residue protein sequence, read N- to C-terminus: Large ribosomal subunit protein uL30 (57 aa).

The protein belongs to the universal ribosomal protein uL30 family. As to quaternary structure, part of the 50S ribosomal subunit.

The polypeptide is Large ribosomal subunit protein uL30 (Clostridium perfringens (strain ATCC 13124 / DSM 756 / JCM 1290 / NCIMB 6125 / NCTC 8237 / Type A)).